Reading from the N-terminus, the 209-residue chain is Imidazoleglycerol-phosphate dehydratase (209 aa).

Positions 1-23 (MQLSDRPLTAPGTAPRQATVSRR) are disordered.

It belongs to the imidazoleglycerol-phosphate dehydratase family.

It localises to the cytoplasm. The catalysed reaction is D-erythro-1-(imidazol-4-yl)glycerol 3-phosphate = 3-(imidazol-4-yl)-2-oxopropyl phosphate + H2O. It functions in the pathway amino-acid biosynthesis; L-histidine biosynthesis; L-histidine from 5-phospho-alpha-D-ribose 1-diphosphate: step 6/9. The protein is Imidazoleglycerol-phosphate dehydratase of Synechococcus elongatus (strain ATCC 33912 / PCC 7942 / FACHB-805) (Anacystis nidulans R2).